The chain runs to 423 residues: Putative competence-damage inducible protein (423 aa).

It belongs to the CinA family.

In Streptococcus uberis (strain ATCC BAA-854 / 0140J), this protein is Putative competence-damage inducible protein.